Here is a 115-residue protein sequence, read N- to C-terminus: Cobalt-zinc-cadmium resistance protein CzcI (115 aa).

A signal peptide spans 1 to 20 (MRRFVLIFVLLILPFQFSWA). A compositionally biased stretch (polar residues) spans 93–102 (QHSSEFSSLN). The tract at residues 93–115 (QHSSEFSSLNARAPDRPQWQRLA) is disordered.

The protein localises to the periplasm. Its function is as follows. Component of the czc cation-efflux system that confers resistance to cobalt, zinc and cadmium. May have a regulatory function. This is Cobalt-zinc-cadmium resistance protein CzcI (czcI) from Cupriavidus metallidurans (strain ATCC 43123 / DSM 2839 / NBRC 102507 / CH34) (Ralstonia metallidurans).